We begin with the raw amino-acid sequence, 262 residues long: Ribosomal RNA small subunit methyltransferase A (262 aa).

Residues N14, L16, G41, E62, D87, and N109 each coordinate S-adenosyl-L-methionine.

The protein belongs to the class I-like SAM-binding methyltransferase superfamily. rRNA adenine N(6)-methyltransferase family. RsmA subfamily.

It localises to the cytoplasm. The enzyme catalyses adenosine(1518)/adenosine(1519) in 16S rRNA + 4 S-adenosyl-L-methionine = N(6)-dimethyladenosine(1518)/N(6)-dimethyladenosine(1519) in 16S rRNA + 4 S-adenosyl-L-homocysteine + 4 H(+). Its function is as follows. Specifically dimethylates two adjacent adenosines (A1518 and A1519) in the loop of a conserved hairpin near the 3'-end of 16S rRNA in the 30S particle. May play a critical role in biogenesis of 30S subunits. This is Ribosomal RNA small subunit methyltransferase A from Francisella tularensis subsp. holarctica (strain FTNF002-00 / FTA).